The sequence spans 705 residues: MDADKEKDLQKFLKNVDEISNLIQEMNSDDPVVQQKAVLETEKRLLLMEEDQEEDECRTTLNKTMISPPQTAMKSAEEINSEAFLASVEKDAKERAKRRRENKVLADALKEKGNEAFAEGNYETAILRYSEGLEKLKDMKVLYTNRAQAYMKLEDYEKALVDCEWALKCDEKCTKAYFHMGKANLALKNYSVSRECYKKILEINPKLQTQVKGYLNQVDLQEKADLQEKEAHELLDSGKNTAVTTKNLLETLSKPDQIPLFYAGGIEILTEMINECTEQTLFRMHNGFSIISDNEVIRRCFSTAGNDAVEEMVCVSVLKLWQAVCSRNEENQRVLVIHHDRARLLAALLSSKVLAIRQQSFALLLHLAQTESGRSLIINHLDLTRLLEALVSFLDFSDKEANTAMGLFTDLALEERFQVWFQANLPGVLPALTGVLKTDPKVSSSSALCQCIAIMGNLSAEPTTRRHMAACEEFGDGCLSLLARCEEDVDLFREVIYTLLGLMMNLCLQAPFVSEVWAVEVSRRCLSLLNSQDGGILTRAAGVLSRTLSSSLKIVEEALRAGVVKKMMKFLKTGGETASRYAIKILAICTNSYHEAREEVIRLDKKLSVMMKLLSSEDEVLVGNAALCLGNCMEVPNVASSLLKTDLLQVLLKLAGSDTQKTAVQVNAGIALGKLCTAEPRFAAQLRKLHGLEILNSTMKYISDS.

Threonine 71 is subject to Phosphothreonine. 3 TPR repeats span residues 106 to 139, 140 to 173, and 174 to 207; these read ADAL…LKDM, KVLY…DEKC, and TKAY…NPKL.

As to expression, expressed in testis and in epithelial cells of trachea and bronchial tube.

The protein resides in the cytoplasm. In terms of biological role, cytoplasmic protein that plays a role in the proper assembly of dynein arm complexes in motile cilia in both respiratory cells and sperm flagella. The sequence is that of Tetratricopeptide repeat protein 12 (TTC12) from Homo sapiens (Human).